A 389-amino-acid polypeptide reads, in one-letter code: S-adenosylmethionine synthase (389 aa).

H15 provides a ligand contact to ATP. D17 contributes to the Mg(2+) binding site. E43 is a binding site for K(+). L-methionine-binding residues include E56 and Q99. The flexible loop stretch occupies residues 99 to 109 (QSPDIAQGVNE). Residues 166-168 (DAK), 234-235 (RF), D243, 249-250 (RK), A266, and K270 contribute to the ATP site. D243 lines the L-methionine pocket. Residue K274 coordinates L-methionine.

The protein belongs to the AdoMet synthase family. Homotetramer; dimer of dimers. It depends on Mg(2+) as a cofactor. The cofactor is K(+).

It is found in the cytoplasm. It catalyses the reaction L-methionine + ATP + H2O = S-adenosyl-L-methionine + phosphate + diphosphate. Its pathway is amino-acid biosynthesis; S-adenosyl-L-methionine biosynthesis; S-adenosyl-L-methionine from L-methionine: step 1/1. In terms of biological role, catalyzes the formation of S-adenosylmethionine (AdoMet) from methionine and ATP. The overall synthetic reaction is composed of two sequential steps, AdoMet formation and the subsequent tripolyphosphate hydrolysis which occurs prior to release of AdoMet from the enzyme. This Laribacter hongkongensis (strain HLHK9) protein is S-adenosylmethionine synthase.